Consider the following 356-residue polypeptide: Probable methyltransferase-like protein 15 homolog (356 aa).

Residues 55 to 57 (GGH), Asp74, Phe103, Asp126, and Gln133 each bind S-adenosyl-L-methionine.

The protein belongs to the methyltransferase superfamily. RsmH family.

Functionally, probable S-adenosyl-L-methionine-dependent methyltransferase. This Drosophila melanogaster (Fruit fly) protein is Probable methyltransferase-like protein 15 homolog.